A 212-amino-acid polypeptide reads, in one-letter code: Cytidylate kinase (212 aa).

ATP is bound at residue 7–15; it reads GPAASGKGT.

Belongs to the cytidylate kinase family. Type 1 subfamily.

The protein resides in the cytoplasm. It carries out the reaction CMP + ATP = CDP + ADP. The catalysed reaction is dCMP + ATP = dCDP + ADP. This is Cytidylate kinase from Rhodopseudomonas palustris (strain HaA2).